A 374-amino-acid chain; its full sequence is uncharacterized protein (374 aa).

Positions 86–104 are enriched in low complexity; sequence RPAATAGTTPATGASGSAR. The segment at 86–109 is disordered; sequence RPAATAGTTPATGASGSARPTDAA. The Macro domain occupies 179 to 354; sequence WWRRSNTTRG…LQRVVFAVHG (176 aa).

This is an uncharacterized protein from Mycobacterium tuberculosis (strain CDC 1551 / Oshkosh).